The following is a 924-amino-acid chain: DNA repair and recombination protein RDH54 (924 aa).

Residues 1–10 (MQIPKYENKP) are compositionally biased toward basic and acidic residues. Disordered stretches follow at residues 1-21 (MQIP…GSNK) and 155-183 (EALS…NDGG). Over residues 168–178 (TTSTTETVPST) the composition is skewed to low complexity. The Helicase ATP-binding domain occupies 299–487 (LENDSDISGC…FTIIDFINPG (189 aa)). ATP is bound at residue 346–353 (IPLTGLCK). The DEGH box signature appears at 472–475 (NDLN). Lys615 participates in a covalent cross-link: Glycyl lysine isopeptide (Lys-Gly) (interchain with G-Cter in ubiquitin). The Helicase C-terminal domain occupies 631-790 (KLKVLMTLLE…DSEMRNKESS (160 aa)).

It belongs to the SNF2/RAD54 helicase family. Interacts with RAD51 and DMC1.

Its subcellular location is the nucleus. The catalysed reaction is ATP + H2O = ADP + phosphate + H(+). Functionally, involved in the recombinational repair of double-strand breaks (DSB) in DNA during mitosis and meiosis. Has DNA dependent ATPase activity. Promotes D-loop (displacement loop) formation with RAD51 recombinase. Modifies the topology of double-stranded DNA during the D-loop reaction to facilitate the invasion of the homologous duplex molecule by the initiating single-stranded DNA substrate. Required for adaptation from G2/M checkpoint arrest induced by a double strand break, by participating in monitoring the extent of single-stranded DNA produced by resection of DNA ends. This role is distinct from its roles in recombination. Promotes colocalization of RAD51 and DMC1 during meiotic recombination. Involved in crossover interference. This Saccharomyces cerevisiae (strain JAY291) (Baker's yeast) protein is DNA repair and recombination protein RDH54 (RDH54).